Here is a 70-residue protein sequence, read N- to C-terminus: Envelope small membrane protein (70 aa).

Gly2 carries the N-myristoyl glycine; by host lipid modification. Residues 2–15 form an endoplasmic reticulum retention signal region; sequence GSLWSKISQLFVDA. The Virion surface segment spans residues 2 to 25; the sequence is GSLWSKISQLFVDAFTEFLVSVVD. The helical transmembrane segment at 26–46 threads the bilayer; sequence IVIFLAILFGFTVAGWLLVFL. The Intravirion segment spans residues 47 to 70; that stretch reads LRVVCSALLRSRSAIHSPELSKVL.

It belongs to the arteriviridae E protein family. In terms of assembly, homooligomer. Associates with itself into higher-order structures, including dimers, trimers and tetramers. Associates with the GP2b-GP3-GP4 complex. Post-translationally, myristoylated. Not glycosylated.

It is found in the virion membrane. The protein resides in the host endoplasmic reticulum membrane. Its subcellular location is the host Golgi apparatus membrane. The protein localises to the secreted. Functionally, minor envelope protein. May function as a viroporin in the virion envelope that facilitates uncoating of the virus in order to release the genomic RNA into the cytoplasm for subsequent replication. The sequence is that of Envelope small membrane protein (GP2b) from Sus scrofa (Pig).